Here is a 145-residue protein sequence, read N- to C-terminus: Small ribosomal subunit protein eS19 (145 aa).

Lys23 bears the N6-acetyllysine mark. Arg67 carries the omega-N-methylarginine modification. N6-acetyllysine occurs at positions 111 and 115. The residue at position 143 (Lys143) is an N6-succinyllysine.

It belongs to the eukaryotic ribosomal protein eS19 family. As to quaternary structure, component of the small ribosomal subunit. Part of the small subunit (SSU) processome, composed of more than 70 proteins and the RNA chaperone small nucleolar RNA (snoRNA) U3. Interacts with RPS19BP1; the interaction is direct and mediates the integration of RPS19 in state post-A1. Interacts with RPS19BP1.

The protein resides in the cytoplasm. It is found in the nucleus. The protein localises to the nucleolus. In terms of biological role, component of the small ribosomal subunit. The ribosome is a large ribonucleoprotein complex responsible for the synthesis of proteins in the cell. Required for pre-rRNA processing and maturation of 40S ribosomal subunits. Part of the small subunit (SSU) processome, first precursor of the small eukaryotic ribosomal subunit. During the assembly of the SSU processome in the nucleolus, many ribosome biogenesis factors, an RNA chaperone and ribosomal proteins associate with the nascent pre-rRNA and work in concert to generate RNA folding, modifications, rearrangements and cleavage as well as targeted degradation of pre-ribosomal RNA by the RNA exosome. This is Small ribosomal subunit protein eS19 (RPS19) from Pongo abelii (Sumatran orangutan).